Consider the following 260-residue polypeptide: Thiamine thiazole synthase (260 aa).

Residues A36, E55–Q56, G63, and H154–D156 each bind NAD(+). Fe cation contacts are provided by D156 and H171. M224 contributes to the NAD(+) binding site. R234 serves as a coordination point for glycine.

It belongs to the THI4 family. As to quaternary structure, homooctamer; tetramer of dimers. It depends on Fe(2+) as a cofactor.

The enzyme catalyses hydrogen sulfide + glycine + NAD(+) = ADP-5-ethyl-4-methylthiazole-2-carboxylate + nicotinamide + 3 H2O + H(+). It participates in cofactor biosynthesis; thiamine diphosphate biosynthesis. Functionally, involved in the biosynthesis of the thiazole moiety of thiamine. Catalyzes the conversion of NAD and glycine to adenosine diphosphate 5-(2-hydroxyethyl)-4-methylthiazole-2-carboxylate (ADT), an adenylated thiazole intermediate, using free sulfide as a source of sulfur. The sequence is that of Thiamine thiazole synthase from Methanosarcina mazei (strain ATCC BAA-159 / DSM 3647 / Goe1 / Go1 / JCM 11833 / OCM 88) (Methanosarcina frisia).